Consider the following 78-residue polypeptide: Small ribosomal subunit protein bS18 (78 aa).

This sequence belongs to the bacterial ribosomal protein bS18 family. Part of the 30S ribosomal subunit. Forms a tight heterodimer with protein bS6.

In terms of biological role, binds as a heterodimer with protein bS6 to the central domain of the 16S rRNA, where it helps stabilize the platform of the 30S subunit. This Limosilactobacillus fermentum (strain NBRC 3956 / LMG 18251) (Lactobacillus fermentum) protein is Small ribosomal subunit protein bS18.